The chain runs to 333 residues: Tetraacyldisaccharide 4'-kinase (333 aa).

60–67 (TVGGTGKT) is a binding site for ATP.

This sequence belongs to the LpxK family.

It catalyses the reaction a lipid A disaccharide + ATP = a lipid IVA + ADP + H(+). It functions in the pathway glycolipid biosynthesis; lipid IV(A) biosynthesis; lipid IV(A) from (3R)-3-hydroxytetradecanoyl-[acyl-carrier-protein] and UDP-N-acetyl-alpha-D-glucosamine: step 6/6. In terms of biological role, transfers the gamma-phosphate of ATP to the 4'-position of a tetraacyldisaccharide 1-phosphate intermediate (termed DS-1-P) to form tetraacyldisaccharide 1,4'-bis-phosphate (lipid IVA). This Pseudomonas putida (strain ATCC 700007 / DSM 6899 / JCM 31910 / BCRC 17059 / LMG 24140 / F1) protein is Tetraacyldisaccharide 4'-kinase.